The sequence spans 160 residues: AP-1 complex subunit sigma-2 (160 aa).

It belongs to the adaptor complexes small subunit family. In terms of assembly, adaptor protein complex 1 (AP-1) is a heterotetramer composed of two large adaptins (gamma-type subunit AP1G1 and beta-type subunit AP1B1), a medium adaptin (mu-type subunit AP1M1 or AP1M2) and a small adaptin (sigma-type subunit AP1S1 or AP1S2 or AP1S3). Binds to MUC1. Widely expressed.

It localises to the golgi apparatus. The protein localises to the cytoplasmic vesicle membrane. Its subcellular location is the membrane. It is found in the clathrin-coated pit. Functionally, subunit of clathrin-associated adaptor protein complex 1 that plays a role in protein sorting in the late-Golgi/trans-Golgi network (TGN) and/or endosomes. The AP complexes mediate both the recruitment of clathrin to membranes and the recognition of sorting signals within the cytosolic tails of transmembrane cargo molecules. This is AP-1 complex subunit sigma-2 (Ap1s2) from Mus musculus (Mouse).